The sequence spans 1047 residues: Ribonucleoside-diphosphate reductase subunit alpha (1047 aa).

ATP-cone domains lie at 9–111 (CTIV…KAHR), 118–219 (LSVI…ARVR), and 237–327 (FEVL…EALD). Residues Thr-442, 457–458 (SC), Gly-486, 670–674 (NLCTE), and 857–861 (PTATI) contribute to the substrate site. A disulfide bridge connects residues Cys-458 and Cys-687. Asn-670 serves as the catalytic Proton acceptor. Residue Cys-672 is the Cysteine radical intermediate of the active site. Glu-674 functions as the Proton acceptor in the catalytic mechanism.

The protein belongs to the ribonucleoside diphosphate reductase large chain family. As to quaternary structure, tetramer of two alpha and two beta subunits.

It catalyses the reaction a 2'-deoxyribonucleoside 5'-diphosphate + [thioredoxin]-disulfide + H2O = a ribonucleoside 5'-diphosphate + [thioredoxin]-dithiol. Its activity is regulated as follows. Under complex allosteric control mediated by deoxynucleoside triphosphates and ATP binding. The type of nucleotide bound at the specificity site determines substrate preference. It seems probable that ATP makes the enzyme reduce CDP and UDP, dGTP favors ADP reduction and dTTP favors GDP reduction. In terms of biological role, provides the precursors necessary for DNA synthesis. Catalyzes the biosynthesis of deoxyribonucleotides from the corresponding ribonucleotides. The protein is Ribonucleoside-diphosphate reductase subunit alpha (nrdA) of Chlamydia muridarum (strain MoPn / Nigg).